Consider the following 46-residue polypeptide: Antimicrobial peptide eNAP-2 (46 aa).

The WAP domain occupies 12 to 46 (RPGRCPTVPPGTFGHCACLCTGDASEPKGQKCCSN).

Has antibiotic activity against several equine uterine pathogens; S.zooepidemicus, E.coli and P.aeruginosa. Highly efficient against S.zoopedemicus. Not active against K.pneumoniae. Selectively inactivates microbial serine proteases (subtilisin A and proteinase K) without inhibiting mammalian serine proteases (human neutrophil elastase, human cathepsin G and bovine pancreatic trypsin). The sequence is that of Antimicrobial peptide eNAP-2 from Equus caballus (Horse).